Consider the following 225-residue polypeptide: Pathogenesis-related 5 protein Jun a 3.0101 (225 aa).

The N-terminal stretch at 1 to 26 (MARVSELAFLLAATLAISLHMQEAGV) is a signal peptide. Cystine bridges form between Cys35-Cys224, Cys76-Cys86, Cys91-Cys97, Cys139-Cys213, Cys144-Cys197, Cys152-Cys162, Cys166-Cys175, and Cys176-Cys184. 3 igE-binding regions span residues 146-157 (ADINAVCPSELK), 158-170 (VDGGCNSACNVFK), and 178-191 (NAYVDNCPATNYSK).

Belongs to the thaumatin family. Expressed in pollen (at protein level).

The protein is Pathogenesis-related 5 protein Jun a 3.0101 of Juniperus ashei (Ozark white cedar).